Consider the following 121-residue polypeptide: Large ribosomal subunit protein bL19 (121 aa).

It belongs to the bacterial ribosomal protein bL19 family.

Functionally, this protein is located at the 30S-50S ribosomal subunit interface and may play a role in the structure and function of the aminoacyl-tRNA binding site. This Borreliella burgdorferi (strain ATCC 35210 / DSM 4680 / CIP 102532 / B31) (Borrelia burgdorferi) protein is Large ribosomal subunit protein bL19 (rplS).